The primary structure comprises 342 residues: Autoinducer 2 import system permease protein LsrC (342 aa).

At 1-13 the chain is on the periplasmic side; the sequence is MLKFIQNNREITA. A helical transmembrane segment spans residues 14–34; it reads LLAVVLLFVLPGFLDRQYLSV. Topologically, residues 35–38 are cytoplasmic; it reads QTLT. A helical membrane pass occupies residues 39–59; that stretch reads MVYSSAQILILLAMGATLVML. Residues 60–69 are Periplasmic-facing; the sequence is TRNIDVSVGS. A helical transmembrane segment spans residues 70–90; that stretch reads ITGMCAVLLGMLLNAGYSLPV. Residues 91 to 92 are Cytoplasmic-facing; the sequence is AC. The helical transmembrane segment at 93–113 threads the bilayer; the sequence is VTTLLLGLLAGFFNGVLVAWL. A topological domain (periplasmic) is located at residue Lys-114. The chain crosses the membrane as a helical span at residues 115 to 135; it reads IPAIVATLGTLGLYRGIMLLW. Topologically, residues 136–154 are cytoplasmic; the sequence is TGGKWIEGLPAELKQLSAP. Residues 155 to 175 traverse the membrane as a helical segment; it reads LLFGVSAIGWLTIILVAFMAW. The Periplasmic segment spans residues 176-212; that stretch reads LLAKTAFGRSFYATGDNLQGARQLGVRTEAIRIVAFS. The helical transmembrane segment at 213–233 threads the bilayer; the sequence is LNGCMAALAGIVFASQIGFIP. The Cytoplasmic segment spans residues 234–251; the sequence is NQTGTGLEMKAIAACVLG. A helical transmembrane segment spans residues 252–272; it reads GISLLGGSGAIIGAVLGAWFL. Topologically, residues 273 to 283 are periplasmic; the sequence is TQIDSVLVLLR. A helical transmembrane segment spans residues 284–304; it reads IPAWWNDFIAGLVLLAVLVFD. Topologically, residues 305 to 342 are cytoplasmic; it reads GRLRCALERNLRRQKYARFMTPPPSVKPASSGKKREAA.

It belongs to the binding-protein-dependent transport system permease family. AraH/RbsC subfamily. In terms of assembly, the complex is composed of two ATP-binding proteins (LsrA), two transmembrane proteins (LsrC and LsrD) and a solute-binding protein (LsrB).

Its subcellular location is the cell inner membrane. In terms of biological role, part of the ABC transporter complex LsrABCD involved in autoinducer 2 (AI-2) import. Probably responsible for the translocation of the substrate across the membrane. The sequence is that of Autoinducer 2 import system permease protein LsrC (lsrC) from Escherichia coli O9:H4 (strain HS).